A 165-amino-acid polypeptide reads, in one-letter code: Selenoprotein F (165 aa).

The signal sequence occupies residues 1–31 (MVAMAAGPSGCLVPAFGLRLLLATVLQAVSA). Sec-96 is a non-standard amino acid (selenocysteine).

As to quaternary structure, forms a tight complex with UGGT1/UGCGL1. Interacts with UGGT2/UGCGL2. Interacts with RDH11. In terms of processing, the N-terminus is blocked. As to expression, higher levels in prostate and thyroid gland.

The protein resides in the endoplasmic reticulum lumen. In terms of biological role, may be involved in redox reactions associated with the formation of disulfide bonds. May contribute to the quality control of protein folding in the endoplasmic reticulum. May regulate protein folding by enhancing the catalytic activity of UGGT1/UGCGL1 and UGGT2/UGCGL2. This Homo sapiens (Human) protein is Selenoprotein F.